Here is a 493-residue protein sequence, read N- to C-terminus: Galactose-1-phosphate uridylyltransferase (493 aa).

The protein belongs to the galactose-1-phosphate uridylyltransferase type 2 family.

The protein resides in the cytoplasm. The enzyme catalyses alpha-D-galactose 1-phosphate + UDP-alpha-D-glucose = alpha-D-glucose 1-phosphate + UDP-alpha-D-galactose. The protein operates within carbohydrate metabolism; galactose metabolism. This is Galactose-1-phosphate uridylyltransferase from Streptococcus thermophilus (strain ATCC BAA-250 / LMG 18311).